The sequence spans 400 residues: Peroxisome biogenesis factor 16 (400 aa).

A disordered region spans residues 176–226 (QKQFQNKRPAVTMSINNNNNINNNDNNNINNNNNTNDDNFNNNNNNNNNRR). Positions 190–224 (INNNNNINNNDNNNINNNNNTNDDNFNNNNNNNNN) are enriched in low complexity.

The protein belongs to the peroxin-16 family.

The protein resides in the cytoplasm. In terms of biological role, required for peroxisome membrane biogenesis. The chain is Peroxisome biogenesis factor 16 (pex16) from Dictyostelium discoideum (Social amoeba).